We begin with the raw amino-acid sequence, 543 residues long: Cytochrome P450 monooxygenase sphH (543 aa).

2 helical membrane passes run 1–21 and 32–52; these read MGPIHNYFGVVCLGIAASVYF and IATFAVLLTGIAISKLLYQLF. Cys487 contributes to the heme binding site.

This sequence belongs to the cytochrome P450 family. Requires heme as cofactor.

Its subcellular location is the membrane. The enzyme catalyses presphingofungin + 2 reduced [NADPH--hemoprotein reductase] + O2 = sphingofungin B1 + 2 oxidized [NADPH--hemoprotein reductase] + H2O + 2 H(+). It functions in the pathway secondary metabolite biosynthesis. In terms of biological role, cytochrome P450 monooxygenase; part of the gene cluster that mediates the biosynthesis of sphingofungins, bioactive molecules acting as sphingolipid inhibitors via inhibiting serine palmitoyl transferase (SPT). Within the pathway, sphH catalyzes the conversion of presphingofungin into sphingofungin B1 via hydroxylagtion at position C-14. Sphingofungin biosynthesis starts with the PKS sphB that produces an C18 polyketide precursor 3-hydroxyoctadeca-4,10-dienoyl-ACP containing one delta-6 desaturation and one delta-12 desaturation. The aminoacyl transferase sphA uses the sphB product to produce 3-keto-presphingofungin by adding an aminomalonate molecule. SphF then reduces the C-3 ketone of 3-keto-presphingofungin which leads to presphingofungin. The cytochrome P450 monooxygenase sphH converts presphingofungin into sphingofungin B1 which is further converted to sphingofungin B by the dioxygenase sphC. SphC is also able to convert presphingofungin into sphingofungin B2. The acetyltransferase sphE acetylates sphingofungin B to produce sphingofungin C, but can also convert sphingofungin B1 into sphingofungin C1 and sphingofungin B2 into sphingofungin C2. Finally, sphingofungin C can be spontaneously converted into sphingofungin D. This is Cytochrome P450 monooxygenase sphH from Aspergillus fumigatus (strain CBS 144.89 / FGSC A1163 / CEA10) (Neosartorya fumigata).